A 154-amino-acid chain; its full sequence is MRNYDLSPLLRQWIGFDKLASTMQGGQEPQGFPPYNIEKTDDNHYRISLALAGFKQSELDIEVEGPRLTVRGKPTPVEKQVEYLHQGLVRKEFSLTFTLAEHLNVDNAQFENGLLHIDLLRQVPEALQPQRIAIGSATPQERQVLESPEAPDQQ.

A sHSP domain is found at 26–137 (GQEPQGFPPY…QPQRIAIGSA (112 aa)).

This sequence belongs to the small heat shock protein (HSP20) family. In terms of assembly, homodimer. Forms homomultimers of about 100-150 subunits at optimal growth temperatures. Conformation changes to oligomers at high temperatures or high ionic concentrations. The decrease in size of the multimers is accompanied by an increase in chaperone activity.

It is found in the cytoplasm. Associates with aggregated proteins, together with IbpA, to stabilize and protect them from irreversible denaturation and extensive proteolysis during heat shock and oxidative stress. Aggregated proteins bound to the IbpAB complex are more efficiently refolded and reactivated by the ATP-dependent chaperone systems ClpB and DnaK/DnaJ/GrpE. Its activity is ATP-independent. The sequence is that of Small heat shock protein IbpB from Yersinia pseudotuberculosis serotype O:1b (strain IP 31758).